We begin with the raw amino-acid sequence, 175 residues long: Epididymal-specific lipocalin-8 (175 aa).

An N-terminal signal peptide occupies residues 1–22 (MEARLLSNVCGFFLVFLLQAES). Residues Asn-66 and Asn-74 are each glycosylated (N-linked (GlcNAc...) asparagine). A disulfide bridge links Cys-79 with Cys-166.

The protein belongs to the calycin superfamily. Lipocalin family. In terms of tissue distribution, predominantly expressed in epididymis.

It is found in the secreted. In terms of biological role, may play a role in male fertility. May act as a retinoid carrier protein within the epididymis. This is Epididymal-specific lipocalin-8 (Lcn8) from Mus musculus (Mouse).